The following is a 141-amino-acid chain: Large ribosomal subunit protein uL11 (141 aa).

The protein belongs to the universal ribosomal protein uL11 family. In terms of assembly, part of the ribosomal stalk of the 50S ribosomal subunit. Interacts with L10 and the large rRNA to form the base of the stalk. L10 forms an elongated spine to which L12 dimers bind in a sequential fashion forming a multimeric L10(L12)X complex. One or more lysine residues are methylated.

Forms part of the ribosomal stalk which helps the ribosome interact with GTP-bound translation factors. This Campylobacter fetus subsp. fetus (strain 82-40) protein is Large ribosomal subunit protein uL11.